A 352-amino-acid polypeptide reads, in one-letter code: Carbohydrate sulfotransferase 11 (352 aa).

The Cytoplasmic segment spans residues 1-16 (MKPALLEVMRMNRICR). The helical; Signal-anchor for type II membrane protein transmembrane segment at 17–37 (MVLATCLGSFILVIFYFQSML) threads the bilayer. At 38–352 (HPVMRRNPFG…YSVPNYLKLD (315 aa)) the chain is on the lumenal side. 3'-phosphoadenylyl sulfate-binding positions include 124–130 (PKVACTN) and 186–194 (REPFERLVS). Asn205, Asn223, Asn321, and Asn342 each carry an N-linked (GlcNAc...) asparagine glycan.

The protein belongs to the sulfotransferase 2 family. In terms of processing, N-glycosylated; required for activity and stability.

It localises to the golgi apparatus membrane. The catalysed reaction is chondroitin beta-D-glucuronate + n 3'-phosphoadenylyl sulfate = chondroitin 4'-sulfate + n adenosine 3',5'-bisphosphate + n H(+). Its function is as follows. Catalyzes the transfer of sulfate to position 4 of the N-acetylgalactosamine (GalNAc) residue of chondroitin. Chondroitin sulfate constitutes the predominant proteoglycan present in cartilage and is distributed on the surfaces of many cells and extracellular matrices. Can also sulfate Gal residues in desulfated dermatan sulfate. Preferentially sulfates in GlcA-&gt;GalNAc unit than in IdoA-&gt;GalNAc unit. Does not form 4, 6-di-O-sulfated GalNAc when chondroitin sulfate C is used as an acceptor. The chain is Carbohydrate sulfotransferase 11 (Chst11) from Rattus norvegicus (Rat).